A 56-amino-acid polypeptide reads, in one-letter code: NNKCDLEFASSECQMRYQDCGEASNCTALIEECKTSLQEECDQASSESSSTTIRPE.

Intrachain disulfides connect Cys-4–Cys-41, Cys-13–Cys-33, and Cys-20–Cys-26. Residue Asn-25 is glycosylated (N-linked (GlcNAc...) asparagine).

As to expression, produced by the albumen gland of the egg cordons.

The protein localises to the secreted. Functionally, water-borne pheromone that attract the marine mollusk Aplysia into breeding aggregations and coordinate male and female reproductive behavior within the aggregation. The chain is Attractin (ATT) from Aplysia depilans (Sea hare).